A 96-amino-acid chain; its full sequence is Large ribosomal subunit protein bL28 (96 aa).

Belongs to the bacterial ribosomal protein bL28 family.

The chain is Large ribosomal subunit protein bL28 from Methylobacterium nodulans (strain LMG 21967 / CNCM I-2342 / ORS 2060).